The primary structure comprises 157 residues: 2-C-methyl-D-erythritol 2,4-cyclodiphosphate synthase (157 aa).

A divalent metal cation-binding residues include D8 and H10. Residues 8-10 and 34-35 contribute to the 4-CDP-2-C-methyl-D-erythritol 2-phosphate site; these read DVH and HS. A divalent metal cation is bound at residue H42. Residues 56–58, 61–65, 132–135, F139, and R142 each bind 4-CDP-2-C-methyl-D-erythritol 2-phosphate; these read DLG, FPDTD, and TTTE.

The protein belongs to the IspF family. Homotrimer. It depends on a divalent metal cation as a cofactor.

It catalyses the reaction 4-CDP-2-C-methyl-D-erythritol 2-phosphate = 2-C-methyl-D-erythritol 2,4-cyclic diphosphate + CMP. The protein operates within isoprenoid biosynthesis; isopentenyl diphosphate biosynthesis via DXP pathway; isopentenyl diphosphate from 1-deoxy-D-xylulose 5-phosphate: step 4/6. Its function is as follows. Involved in the biosynthesis of isopentenyl diphosphate (IPP) and dimethylallyl diphosphate (DMAPP), two major building blocks of isoprenoid compounds. Catalyzes the conversion of 4-diphosphocytidyl-2-C-methyl-D-erythritol 2-phosphate (CDP-ME2P) to 2-C-methyl-D-erythritol 2,4-cyclodiphosphate (ME-CPP) with a corresponding release of cytidine 5-monophosphate (CMP). The sequence is that of 2-C-methyl-D-erythritol 2,4-cyclodiphosphate synthase from Salinibacter ruber (strain DSM 13855 / M31).